We begin with the raw amino-acid sequence, 387 residues long: Limonene 1,2-monooxygenase (387 aa).

It belongs to the bacterial luciferase oxidoreductase family. Requires FAD as cofactor.

It catalyses the reaction (4S)-limonene + NADPH + O2 + H(+) = limonene 1,2-epoxide + NADP(+) + H2O. The catalysed reaction is (4S)-limonene + NADH + O2 + H(+) = limonene 1,2-epoxide + NAD(+) + H2O. It carries out the reaction (4R)-limonene + NADH + O2 + H(+) = limonene 1,2-epoxide + NAD(+) + H2O. The enzyme catalyses (4R)-limonene + NADPH + O2 + H(+) = limonene 1,2-epoxide + NADP(+) + H2O. The protein operates within terpene metabolism; (4R)-limonene degradation; (1S,4R)-1-hydroxylimonen-2-one from (4R)-limonene: step 1/3. In terms of biological role, acts on both enantiomers of limonene by their NAD-dependent epoxidation at the 1,2 double bond forming limonene-1,2-epoxide. The protein is Limonene 1,2-monooxygenase (limB) of Rhodococcus erythropolis (Arthrobacter picolinophilus).